A 415-amino-acid polypeptide reads, in one-letter code: uncharacterized protein (415 aa).

[4Fe-4S] cluster-binding residues include C276 and C316.

In terms of assembly, homodimer. It depends on [4Fe-4S] cluster as a cofactor.

This is an uncharacterized protein from Methanocaldococcus jannaschii (strain ATCC 43067 / DSM 2661 / JAL-1 / JCM 10045 / NBRC 100440) (Methanococcus jannaschii).